The following is a 249-amino-acid chain: Triosephosphate isomerase (249 aa).

A substrate-binding site is contributed by 9–11; the sequence is NWK. His-94 (electrophile) is an active-site residue. Glu-166 (proton acceptor) is an active-site residue. Substrate-binding positions include Gly-172 and 232–233; that span reads GG.

It belongs to the triosephosphate isomerase family. As to quaternary structure, homodimer.

Its subcellular location is the cytoplasm. It catalyses the reaction D-glyceraldehyde 3-phosphate = dihydroxyacetone phosphate. The protein operates within carbohydrate biosynthesis; gluconeogenesis. It functions in the pathway carbohydrate degradation; glycolysis; D-glyceraldehyde 3-phosphate from glycerone phosphate: step 1/1. Its function is as follows. Involved in the gluconeogenesis. Catalyzes stereospecifically the conversion of dihydroxyacetone phosphate (DHAP) to D-glyceraldehyde-3-phosphate (G3P). The sequence is that of Triosephosphate isomerase from Xylella fastidiosa (strain M12).